A 247-amino-acid polypeptide reads, in one-letter code: tRNA uridine(34) hydroxylase (247 aa).

Residues 124-218 enclose the Rhodanese domain; that stretch reads TKQDVIVIDT…YLEDTQNKNN (95 aa). Residue Cys-178 is the Cysteine persulfide intermediate of the active site.

It belongs to the TrhO family.

It carries out the reaction uridine(34) in tRNA + AH2 + O2 = 5-hydroxyuridine(34) in tRNA + A + H2O. Functionally, catalyzes oxygen-dependent 5-hydroxyuridine (ho5U) modification at position 34 in tRNAs. The chain is tRNA uridine(34) hydroxylase from Rickettsia africae (strain ESF-5).